The primary structure comprises 116 residues: uncharacterized protein (116 aa).

A helical membrane pass occupies residues 20-42 (YLNKYYSVITYFLAFLTKFAILL). A disordered region spans residues 95–116 (IEFQSKSSPVPPASESNKGINE).

It localises to the membrane. This is an uncharacterized protein from Saccharomyces cerevisiae (strain ATCC 204508 / S288c) (Baker's yeast).